We begin with the raw amino-acid sequence, 191 residues long: MIVTPVSEVEGEFFKTWSPSMKSTSSNSCNSKNHIDTRDINSFYPSPVEDSEAFIPNNQPYSFLLVDDNEINLRIFRRMLLKLFPNASVRTVQESASVEISHRTLSHYHLIFLDIEMPIVTGTEIASKVRSSRELDQVGLIAVTTKYLCADLELYEKLGFDFTFRKPVEYPTNYILQKIEQVLQTRCGGRV.

Residues Ser62 to Gln181 enclose the Response regulatory domain. At Asp114 the chain carries 4-aspartylphosphate.

Required for stress adaptation, morphogenesis and virulence. This chain is Stress response regulator protein 1 (SRR1), found in Clavispora lusitaniae (strain ATCC 42720) (Yeast).